Reading from the N-terminus, the 171-residue chain is S-ribosylhomocysteine lyase (171 aa).

Residues His54, His58, and Cys128 each coordinate Fe cation.

It belongs to the LuxS family. As to quaternary structure, homodimer. It depends on Fe cation as a cofactor.

It catalyses the reaction S-(5-deoxy-D-ribos-5-yl)-L-homocysteine = (S)-4,5-dihydroxypentane-2,3-dione + L-homocysteine. In terms of biological role, involved in the synthesis of autoinducer 2 (AI-2) which is secreted by bacteria and is used to communicate both the cell density and the metabolic potential of the environment. The regulation of gene expression in response to changes in cell density is called quorum sensing. Catalyzes the transformation of S-ribosylhomocysteine (RHC) to homocysteine (HC) and 4,5-dihydroxy-2,3-pentadione (DPD). In Escherichia coli O81 (strain ED1a), this protein is S-ribosylhomocysteine lyase.